The chain runs to 240 residues: Probable septum site-determining protein MinC (240 aa).

It belongs to the MinC family. In terms of assembly, interacts with MinD and FtsZ.

Its function is as follows. Cell division inhibitor that blocks the formation of polar Z ring septums. Rapidly oscillates between the poles of the cell to destabilize FtsZ filaments that have formed before they mature into polar Z rings. Prevents FtsZ polymerization. The protein is Probable septum site-determining protein MinC of Buchnera aphidicola subsp. Cinara cedri (strain Cc).